A 720-amino-acid chain; its full sequence is Nucleoporin 88 (720 aa).

Residues 584 to 611 (LALCREDRKSLTEAAERLADKYEDAKYR) adopt a coiled-coil conformation.

As to expression, widely expressed. Higher levels of expression are detected in highly proliferative frontal regions of the embryo, e.g. brain, eye and anterior trunk.

The protein localises to the nucleus. Its subcellular location is the nuclear pore complex. Functionally, component of the nuclear pore complex. The sequence is that of Nucleoporin 88 from Danio rerio (Zebrafish).